The sequence spans 395 residues: Membrane glycoprotein spo14 (395 aa).

Residues 1–346 (MAELHLSFPA…KLEDAGVILR (346 aa)) are Cytoplasmic-facing. WD repeat units lie at residues 250 to 285 (MIRDLKNAKGVTCFCCDKENGMIIVAGADCSIRFMS) and 290 to 326 (KLSQVYKHSLPVTDMQLSPDSEALVSVSADGLLCLQF). Residues 347–367 (LSLMFPFVLAILYFYLQLLFP) traverse the membrane as a helical; Signal-anchor for type II membrane protein segment. The Lumenal segment spans residues 368-395 (DEKLDAIHRFFSFILHIFSKYTIRNYDL).

It localises to the endoplasmic reticulum membrane. Its subcellular location is the golgi apparatus. The protein localises to the cis-Golgi network membrane. Functionally, required for the formation of transport vesicles from the ER. This function involves the cytoplasmic domain of the protein, which is thought to interact with the small GTP-binding protein sar1. The sequence is that of Membrane glycoprotein spo14 (spo14) from Schizosaccharomyces pombe (strain 972 / ATCC 24843) (Fission yeast).